The chain runs to 200 residues: Sorting nexin-10 (200 aa).

A required for interaction with ATP6V1D region spans residues 8–125 (EEFVSVWVRD…SLHLFLQSHL (118 aa)). The region spanning 10–127 (FVSVWVRDPR…HLFLQSHLNS (118 aa)) is the PX domain. Residues arginine 53, lysine 79, and arginine 94 each coordinate a 1,2-diacyl-sn-glycero-3-phospho-(1D-myo-inositol-3-phosphate). The segment covering 156–167 (FPEEEEGKKEND) has biased composition (basic and acidic residues). Positions 156–200 (FPEEEEGKKENDIDYDSESSSSGFGHSSDDSSSHGCKMSTAPQES) are disordered.

Belongs to the sorting nexin family. In terms of assembly, interacts with ATP6V1D; may play a role in ciliogenesis.

Its subcellular location is the cytoplasm. The protein resides in the endosome membrane. It is found in the cytoskeleton. It localises to the microtubule organizing center. The protein localises to the centrosome. Its function is as follows. Probable phosphoinositide-binding protein involved in protein sorting and membrane trafficking in endosomes. Plays a role in cilium biogenesis through regulation of the transport and the localization of proteins to the cilium. Required for the localization to the cilium of V-ATPase subunit ATP6V1D and ATP6V0D1, and RAB8A. Involved in osteoclast differentiation and therefore bone resorption. In Bos taurus (Bovine), this protein is Sorting nexin-10 (SNX10).